The following is a 123-amino-acid chain: ATP synthase epsilon chain (123 aa).

It belongs to the ATPase epsilon chain family. As to quaternary structure, F-type ATPases have 2 components, CF(1) - the catalytic core - and CF(0) - the membrane proton channel. CF(1) has five subunits: alpha(3), beta(3), gamma(1), delta(1), epsilon(1). CF(0) has three main subunits: a, b and c.

Its subcellular location is the cell inner membrane. Produces ATP from ADP in the presence of a proton gradient across the membrane. The polypeptide is ATP synthase epsilon chain (atpC) (Helicobacter pylori (strain ATCC 700392 / 26695) (Campylobacter pylori)).